The primary structure comprises 661 residues: MVEHYPFKLNSEFDPQGDQPQAIEKIVKGVKEGKRHQTLLGATGTGKTFTMSNVIKEVGKPTLIIAHNKTLAGQLYSEFKEFFPENRVEYFVSYYDYYQPEAYVPSTDTFIEKDASINDEIDQLRHSATSALFERDDVIIIASVSCIYGLGNPEEYKDLVVSVRVGMEMDRSELLRKLVDVQYSRNDIDFQRGTFRVRGDVVEIFPASREEMCIRVEFFGDEIDRIREVNYLTGEVIREREHFAIFPASHFVTREEKMKIAIERIEKELEERLKELKDENKLLEAQRLEQRTNYDLEMMREMGFCSGIENYSVHLTLRPLGSTPYTLLDYFGDDWLVMIDESHVTLPQIRGMFNGDRARKQVLVDHGFRLPSAMDNRPLKFEEFEQKTNQLVYVSATPGPYEIEHTDEMIEQIIRPTGLLDPKIDVRPTKNQIDDLLSEIQERIDRDERVLVTTLTKKMSEDLTTYMKEAGIKVNYLHSEIKTLERIEIIRDLRMGTYDVVVGINLLREGIDIPEVSLVVILDADKEGFLRSNRSLIQTIGRAARNEKGEVIMYADKITDSMQYALDETQRRRDIQTAHNEKYGITPKTINKKIHDVISATVDNDETNEKQQTELPKKMTKKERQKTIENIEKEMKKAAKDLDFEKATELRDMLFELKSEG.

The Helicase ATP-binding domain occupies 28-414; sequence KGVKEGKRHQ…HTDEMIEQII (387 aa). Residue 41–48 participates in ATP binding; the sequence is GATGTGKT. The Beta-hairpin signature appears at 94–117; that stretch reads YYDYYQPEAYVPSTDTFIEKDASI. The region spanning 432 to 598 is the Helicase C-terminal domain; that stretch reads QIDDLLSEIQ…TINKKIHDVI (167 aa). Residues 604-625 form a disordered region; it reads NDETNEKQQTELPKKMTKKERQ. Basic and acidic residues predominate over residues 607 to 617; that stretch reads TNEKQQTELPK. A UVR domain is found at 625 to 660; it reads QKTIENIEKEMKKAAKDLDFEKATELRDMLFELKSE.

Belongs to the UvrB family. As to quaternary structure, forms a heterotetramer with UvrA during the search for lesions. Interacts with UvrC in an incision complex.

The protein localises to the cytoplasm. The UvrABC repair system catalyzes the recognition and processing of DNA lesions. A damage recognition complex composed of 2 UvrA and 2 UvrB subunits scans DNA for abnormalities. Upon binding of the UvrA(2)B(2) complex to a putative damaged site, the DNA wraps around one UvrB monomer. DNA wrap is dependent on ATP binding by UvrB and probably causes local melting of the DNA helix, facilitating insertion of UvrB beta-hairpin between the DNA strands. Then UvrB probes one DNA strand for the presence of a lesion. If a lesion is found the UvrA subunits dissociate and the UvrB-DNA preincision complex is formed. This complex is subsequently bound by UvrC and the second UvrB is released. If no lesion is found, the DNA wraps around the other UvrB subunit that will check the other stand for damage. This is UvrABC system protein B from Staphylococcus haemolyticus (strain JCSC1435).